The sequence spans 351 residues: Small ribosomal subunit biogenesis GTPase RsgA 1 (351 aa).

The region spanning 100–258 is the CP-type G domain; sequence LRTDAQIVAS…IIDTPGMREL (159 aa). GTP is bound by residues 148-151 and 200-208; these read SKVD and GSSGAGKST. 4 residues coordinate Zn(2+): Cys282, Cys287, His289, and Cys295.

This sequence belongs to the TRAFAC class YlqF/YawG GTPase family. RsgA subfamily. As to quaternary structure, monomer. Associates with 30S ribosomal subunit, binds 16S rRNA. Zn(2+) serves as cofactor.

The protein resides in the cytoplasm. Its function is as follows. One of several proteins that assist in the late maturation steps of the functional core of the 30S ribosomal subunit. Helps release RbfA from mature subunits. May play a role in the assembly of ribosomal proteins into the subunit. Circularly permuted GTPase that catalyzes slow GTP hydrolysis, GTPase activity is stimulated by the 30S ribosomal subunit. The polypeptide is Small ribosomal subunit biogenesis GTPase RsgA 1 (Oceanobacillus iheyensis (strain DSM 14371 / CIP 107618 / JCM 11309 / KCTC 3954 / HTE831)).